We begin with the raw amino-acid sequence, 647 residues long: Threonine--tRNA ligase (647 aa).

The TGS domain occupies 1 to 61; the sequence is MIKITFPDGA…EEDGSIEIVT (61 aa). Residues 240-538 are catalytic; sequence DHRKLGKELD…LIETYKGAFP (299 aa). Zn(2+) contacts are provided by C334, H385, and H515.

Belongs to the class-II aminoacyl-tRNA synthetase family. In terms of assembly, homodimer. Requires Zn(2+) as cofactor.

Its subcellular location is the cytoplasm. The enzyme catalyses tRNA(Thr) + L-threonine + ATP = L-threonyl-tRNA(Thr) + AMP + diphosphate + H(+). Catalyzes the attachment of threonine to tRNA(Thr) in a two-step reaction: L-threonine is first activated by ATP to form Thr-AMP and then transferred to the acceptor end of tRNA(Thr). Also edits incorrectly charged L-seryl-tRNA(Thr). This chain is Threonine--tRNA ligase, found in Streptococcus pyogenes serotype M2 (strain MGAS10270).